A 219-amino-acid chain; its full sequence is Large ribosomal subunit protein uL4 (219 aa).

Positions 43-101 (AAARQGTHKTKRRGEVRGGGKKPYRQKGTGRARQGSTRAPQFAGGGVVHGPQPRDYSQR) are disordered. Positions 61–72 (GGKKPYRQKGTG) are enriched in basic residues.

It belongs to the universal ribosomal protein uL4 family. Part of the 50S ribosomal subunit.

In terms of biological role, one of the primary rRNA binding proteins, this protein initially binds near the 5'-end of the 23S rRNA. It is important during the early stages of 50S assembly. It makes multiple contacts with different domains of the 23S rRNA in the assembled 50S subunit and ribosome. Functionally, forms part of the polypeptide exit tunnel. The polypeptide is Large ribosomal subunit protein uL4 (Streptomyces coelicolor (strain ATCC BAA-471 / A3(2) / M145)).